The primary structure comprises 258 residues: Tritrans,polycis-undecaprenyl-diphosphate synthase (geranylgeranyl-diphosphate specific) (258 aa).

Aspartate 37 is a catalytic residue. Aspartate 37 is a Mg(2+) binding site. Residues 38–41 (GNRR), histidine 54, and 82–84 (STE) contribute to the substrate site. Asparagine 85 (proton acceptor) is an active-site residue. Residues phenylalanine 86, arginine 88, arginine 207, and 213 to 215 (RIS) each bind substrate. Position 226 (glutamate 226) interacts with Mg(2+).

The protein belongs to the UPP synthase family. Homodimer. The cofactor is Mg(2+).

The enzyme catalyses geranylgeranyl diphosphate + 7 isopentenyl diphosphate = tri-trans,hepta-cis-undecaprenyl diphosphate + 7 diphosphate. Its function is as follows. Catalyzes the sequential condensation of isopentenyl diphosphate (IPP) with geranylgeranyl diphosphate (GGPP) to yield (2Z,6Z,10Z,14Z,18Z,22Z,26Z,30E,34E,38E)-undecaprenyl diphosphate (tritrans,heptacis-UPP). It is probably the precursor of glycosyl carrier lipids. This Thermoplasma acidophilum (strain ATCC 25905 / DSM 1728 / JCM 9062 / NBRC 15155 / AMRC-C165) protein is Tritrans,polycis-undecaprenyl-diphosphate synthase (geranylgeranyl-diphosphate specific).